Consider the following 162-residue polypeptide: Ribosome maturation factor RimP (162 aa).

This sequence belongs to the RimP family.

The protein resides in the cytoplasm. Its function is as follows. Required for maturation of 30S ribosomal subunits. In Cupriavidus metallidurans (strain ATCC 43123 / DSM 2839 / NBRC 102507 / CH34) (Ralstonia metallidurans), this protein is Ribosome maturation factor RimP.